Consider the following 273-residue polypeptide: 2-dehydro-3-deoxyphosphooctonate aldolase (273 aa).

This sequence belongs to the KdsA family.

The protein resides in the cytoplasm. The catalysed reaction is D-arabinose 5-phosphate + phosphoenolpyruvate + H2O = 3-deoxy-alpha-D-manno-2-octulosonate-8-phosphate + phosphate. It participates in carbohydrate biosynthesis; 3-deoxy-D-manno-octulosonate biosynthesis; 3-deoxy-D-manno-octulosonate from D-ribulose 5-phosphate: step 2/3. It functions in the pathway bacterial outer membrane biogenesis; lipopolysaccharide biosynthesis. The sequence is that of 2-dehydro-3-deoxyphosphooctonate aldolase from Nitratidesulfovibrio vulgaris (strain DP4) (Desulfovibrio vulgaris).